A 1009-amino-acid chain; its full sequence is Protein-tyrosine kinase 2-beta (1009 aa).

The 321-residue stretch at arginine 39–lysine 359 folds into the FERM domain. Residues serine 361, serine 375, and serine 399 each carry the phosphoserine modification. Tyrosine 402 bears the Phosphotyrosine; by autocatalysis mark. The Protein kinase domain maps to valine 425–tyrosine 683. Residues leucine 431–valine 439, lysine 457, and glutamate 503–glutamate 509 contribute to the ATP site. Aspartate 549 acts as the Proton acceptor in catalysis. Residues tyrosine 579, tyrosine 580, and tyrosine 722 each carry the phosphotyrosine modification. Residues proline 702–proline 725 are disordered. Serine 762 carries the phosphoserine modification. Threonine 765 bears the Phosphothreonine mark. The interaction with TGFB1I1 stretch occupies residues lysine 801–glutamate 1009. A Phosphotyrosine modification is found at tyrosine 834. A Phosphoserine modification is found at serine 839. Position 842 is a phosphothreonine (threonine 842). Tyrosine 849 carries the post-translational modification Phosphotyrosine. Serine 866 is subject to Phosphoserine. Positions glutamine 868–glutamate 1009 are focal adhesion targeting (FAT). At tyrosine 881 the chain carries Phosphotyrosine.

This sequence belongs to the protein kinase superfamily. Tyr protein kinase family. FAK subfamily. Homodimer, or homooligomer. Interacts with NPHP1, ASAP1, ASAP2, ARHGAP26, SKAP2 and TGFB1I1. The Tyr-402 phosphorylated form interacts with SRC (via SH2 domain) and SRC family members. Forms a signaling complex with EPHA1, LCK and phosphatidylinositol 3-kinase; upon activation by EFNA1. Interacts with GRB2 (via SH2 domain). Interacts with P53/TP53 and MDM2. Interacts with MYLK. Interacts with BCAR1. Interacts with RB1CC1. Interacts with RHOU. Interacts with VAV1. Interacts with PDPK1. Interacts with LPXN and PTPN12. Interacts with SIRPA and SH2D3C. Interacts (hypophosphorylated) with PXN. Interacts with ARHGAP10. Interacts with KCNA2. In terms of processing, phosphorylated on tyrosine residues in response to various stimuli that elevate the intracellular calcium concentration; this activation is indirect and may be mediated by production of reactive oxygen species (ROS). Tyr-402 is the major autophosphorylation site, but other kinases can also phosphorylate Tyr-402. Autophosphorylation occurs in trans, i.e. one subunit of the dimeric receptor phosphorylates tyrosine residues on the other subunit. Phosphorylation at Tyr-402 promotes interaction with SRC and SRC family members, leading to phosphorylation at Tyr-579; Tyr-580 and Tyr-881. Phosphorylation at Tyr-881 is important for interaction with GRB2. Phosphorylated on tyrosine residues upon activation of FGR and PKC. Recruitment by NPHP1 to cell matrix adhesions initiates Tyr-402 phosphorylation. In monocytes, adherence to substrata is required for tyrosine phosphorylation and kinase activation. Angiotensin II, thapsigargin and L-alpha-lysophosphatidic acid (LPA) also induce autophosphorylation and increase kinase activity. Phosphorylation by MYLK promotes ITGB2 activation and is thus essential to trigger neutrophil transmigration during lung injury. Dephosphorylated by PTPN12. Highly expressed in pulmonary vein endothelial cells, lung and brain (at protein level). Isoform 1 is expressed at high levels in the brain (hippocampus, cerebral cortex and olfactory bulb) and poorly in the spleen and other tissues, whereas isoforms 2 and 3 are expressed in the spleen and brain (highest in cerebellum).

Its subcellular location is the cytoplasm. It localises to the perinuclear region. The protein localises to the cell membrane. The protein resides in the cell projection. It is found in the lamellipodium. Its subcellular location is the cell cortex. It localises to the nucleus. The protein localises to the cell junction. The protein resides in the focal adhesion. The catalysed reaction is L-tyrosyl-[protein] + ATP = O-phospho-L-tyrosyl-[protein] + ADP + H(+). With respect to regulation, activated in response to stimuli that lead to increased intracellular Ca(2+) levels; this activation is indirect and may be mediated by calcium-mediated production of reactive oxygen species (ROS). Activated by autophosphorylation at Tyr-402; this creates a binding site for SRC family kinases and leads to phosphorylation at additional tyrosine residues. Phosphorylation at Tyr-402, Tyr-579 and Tyr-580 is required for optimal kinase activity. Functionally, non-receptor protein-tyrosine kinase that regulates reorganization of the actin cytoskeleton, cell polarization, cell migration, adhesion, spreading and bone remodeling. Plays a role in the regulation of the humoral immune response, and is required for normal levels of marginal B-cells in the spleen and normal migration of splenic B-cells. Required for normal macrophage polarization and migration towards sites of inflammation. Regulates cytoskeleton rearrangement and cell spreading in T-cells, and contributes to the regulation of T-cell responses. Promotes osteoclastic bone resorption; this requires both PTK2B/PYK2 and SRC. May inhibit differentiation and activity of osteoprogenitor cells. Functions in signaling downstream of integrin and collagen receptors, immune receptors, G-protein coupled receptors (GPCR), cytokine, chemokine and growth factor receptors, and mediates responses to cellular stress. Forms multisubunit signaling complexes with SRC and SRC family members upon activation; this leads to the phosphorylation of additional tyrosine residues, creating binding sites for scaffold proteins, effectors and substrates. Regulates numerous signaling pathways. Promotes activation of phosphatidylinositol 3-kinase and of the AKT1 signaling cascade. Promotes activation of NOS3. Regulates production of the cellular messenger cGMP. Promotes activation of the MAP kinase signaling cascade, including activation of MAPK1/ERK2, MAPK3/ERK1 and MAPK8/JNK1. Promotes activation of Rho family GTPases, such as RHOA and RAC1. Recruits the ubiquitin ligase MDM2 to P53/TP53 in the nucleus, and thereby regulates P53/TP53 activity, P53/TP53 ubiquitination and proteasomal degradation. Acts as a scaffold, binding to both PDPK1 and SRC, thereby allowing SRC to phosphorylate PDPK1 at 'Tyr-9, 'Tyr-373', and 'Tyr-376'. Promotes phosphorylation of NMDA receptors by SRC family members, and thereby contributes to the regulation of NMDA receptor ion channel activity and intracellular Ca(2+) levels. May also regulate potassium ion transport by phosphorylation of potassium channel subunits. Phosphorylates SRC; this increases SRC kinase activity. Phosphorylates ASAP1, NPHP1, KCNA2 and SHC1. Promotes phosphorylation of ASAP2, RHOU and PXN; this requires both SRC and PTK2/PYK2. In Rattus norvegicus (Rat), this protein is Protein-tyrosine kinase 2-beta (Ptk2b).